A 115-amino-acid polypeptide reads, in one-letter code: Probable mycobacterial cidal antitoxin Rv3188 (115 aa).

This sequence belongs to the MbcA/ParS/Xre antitoxin family. As to quaternary structure, forms a heterotetramer with cognate toxin Rv3189.

In terms of biological role, probable antitoxin component of a type II toxin-antitoxin (TA) system. Neutralizes the activity of cognate toxin Rv3189 by blocking access to the toxin active site. In Mycobacterium tuberculosis (strain ATCC 25618 / H37Rv), this protein is Probable mycobacterial cidal antitoxin Rv3188.